The chain runs to 211 residues: Lipoprotein signal peptidase (211 aa).

3 helical membrane-spanning segments follow: residues 12 to 32 (LLALLFVTLVAIDQWTKYLAV), 96 to 116 (AFRNGFFTLVSLGAVAFILHY), and 127 to 147 (LQVALALVLSGAVGNFLDRLA). Active-site residues include D153 and D174. A helical membrane pass occupies residues 167–187 (WPTFNIADSLIVVGVALLVLH).

Belongs to the peptidase A8 family.

The protein resides in the cell inner membrane. It catalyses the reaction Release of signal peptides from bacterial membrane prolipoproteins. Hydrolyzes -Xaa-Yaa-Zaa-|-(S,diacylglyceryl)Cys-, in which Xaa is hydrophobic (preferably Leu), and Yaa (Ala or Ser) and Zaa (Gly or Ala) have small, neutral side chains.. The protein operates within protein modification; lipoprotein biosynthesis (signal peptide cleavage). This protein specifically catalyzes the removal of signal peptides from prolipoproteins. This Anaeromyxobacter sp. (strain Fw109-5) protein is Lipoprotein signal peptidase.